Reading from the N-terminus, the 252-residue chain is Carboxy-S-adenosyl-L-methionine synthase (252 aa).

S-adenosyl-L-methionine is bound by residues Tyr-45, 70–72 (GCS), 95–96 (DN), 127–128 (DI), Asn-142, and Arg-209.

The protein belongs to the class I-like SAM-binding methyltransferase superfamily. Cx-SAM synthase family. In terms of assembly, homodimer.

It carries out the reaction prephenate + S-adenosyl-L-methionine = carboxy-S-adenosyl-L-methionine + 3-phenylpyruvate + H2O. In terms of biological role, catalyzes the conversion of S-adenosyl-L-methionine (SAM) to carboxy-S-adenosyl-L-methionine (Cx-SAM). This chain is Carboxy-S-adenosyl-L-methionine synthase, found in Pseudomonas paraeruginosa (strain DSM 24068 / PA7) (Pseudomonas aeruginosa (strain PA7)).